We begin with the raw amino-acid sequence, 107 residues long: Proteinase inhibitor I-B (107 aa).

Positions 1–22 (MVKFAHVVAFLLLASLFQPLTA) are cleaved as a signal peptide. Residues 23–39 (RDLEINVLQLDVSQSGC) constitute a propeptide that is removed on maturation.

It belongs to the protease inhibitor I13 (potato type I serine protease inhibitor) family.

The protein resides in the secreted. This is Proteinase inhibitor I-B (TIMPA) from Nicotiana tabacum (Common tobacco).